We begin with the raw amino-acid sequence, 206 residues long: Dephospho-CoA kinase (206 aa).

Positions Ile4–Phe200 constitute a DPCK domain. Gly12–Thr17 provides a ligand contact to ATP.

The protein belongs to the CoaE family.

The protein localises to the cytoplasm. It carries out the reaction 3'-dephospho-CoA + ATP = ADP + CoA + H(+). It participates in cofactor biosynthesis; coenzyme A biosynthesis; CoA from (R)-pantothenate: step 5/5. Catalyzes the phosphorylation of the 3'-hydroxyl group of dephosphocoenzyme A to form coenzyme A. The protein is Dephospho-CoA kinase of Escherichia coli O6:H1 (strain CFT073 / ATCC 700928 / UPEC).